A 319-amino-acid polypeptide reads, in one-letter code: NADH-quinone oxidoreductase subunit H 1 (319 aa).

The next 8 helical transmembrane spans lie at 1–21, 74–94, 107–127, 147–167, 179–199, 238–258, 262–282, and 293–313; these read MIGL…LLVV, FAYI…FGVI, VGVL…VLGA, LAYE…AGSL, VWFV…GVAA, VLLV…GPWL, IWFG…RATL, and FAWK…GIVV.

This sequence belongs to the complex I subunit 1 family. NDH-1 is composed of 14 different subunits. Subunits NuoA, H, J, K, L, M, N constitute the membrane sector of the complex.

It is found in the cell inner membrane. It carries out the reaction a quinone + NADH + 5 H(+)(in) = a quinol + NAD(+) + 4 H(+)(out). NDH-1 shuttles electrons from NADH, via FMN and iron-sulfur (Fe-S) centers, to quinones in the respiratory chain. The immediate electron acceptor for the enzyme in this species is believed to be ubiquinone. Couples the redox reaction to proton translocation (for every two electrons transferred, four hydrogen ions are translocated across the cytoplasmic membrane), and thus conserves the redox energy in a proton gradient. This subunit may bind ubiquinone. This is NADH-quinone oxidoreductase subunit H 1 from Rhodopseudomonas palustris (strain BisB5).